A 519-amino-acid chain; its full sequence is 2,3-bisphosphoglycerate-independent phosphoglycerate mutase (519 aa).

Mn(2+)-binding residues include aspartate 18 and serine 68. Serine 68 functions as the Phosphoserine intermediate in the catalytic mechanism. Substrate is bound by residues histidine 129, 159–160 (RD), arginine 191, arginine 197, 267–270 (RADR), and lysine 341. 5 residues coordinate Mn(2+): aspartate 408, histidine 412, aspartate 449, histidine 450, and histidine 468.

This sequence belongs to the BPG-independent phosphoglycerate mutase family. In terms of assembly, monomer. Mn(2+) is required as a cofactor.

The enzyme catalyses (2R)-2-phosphoglycerate = (2R)-3-phosphoglycerate. The protein operates within carbohydrate degradation; glycolysis; pyruvate from D-glyceraldehyde 3-phosphate: step 3/5. Functionally, catalyzes the interconversion of 2-phosphoglycerate and 3-phosphoglycerate. The chain is 2,3-bisphosphoglycerate-independent phosphoglycerate mutase from Coxiella burnetii (strain Dugway 5J108-111).